The chain runs to 695 residues: Transketolase (695 aa).

Residue His-37 coordinates substrate. Residues His-77 and 126–128 (GPL) contribute to the thiamine diphosphate site. Position 164 (Asp-164) interacts with Mg(2+). The thiamine diphosphate site is built by Gly-165 and Asn-194. Mg(2+) is bound by residues Asn-194 and Ile-196. Residues His-268, Arg-361, and Ser-388 each contribute to the substrate site. His-268 contributes to the thiamine diphosphate binding site. The active-site Proton donor is Glu-415. Phe-441 provides a ligand contact to thiamine diphosphate. 3 residues coordinate substrate: His-465, Asp-473, and Arg-524.

The protein belongs to the transketolase family. Homodimer. Requires Mg(2+) as cofactor. It depends on Ca(2+) as a cofactor. Mn(2+) serves as cofactor. The cofactor is Co(2+). Thiamine diphosphate is required as a cofactor.

It carries out the reaction D-sedoheptulose 7-phosphate + D-glyceraldehyde 3-phosphate = aldehydo-D-ribose 5-phosphate + D-xylulose 5-phosphate. It participates in carbohydrate biosynthesis; Calvin cycle. In terms of biological role, catalyzes the transfer of a two-carbon ketol group from a ketose donor to an aldose acceptor, via a covalent intermediate with the cofactor thiamine pyrophosphate. This chain is Transketolase (cbbT), found in Sinorhizobium medicae (strain WSM419) (Ensifer medicae).